A 433-amino-acid polypeptide reads, in one-letter code: Ribosomal protein uS12 methylthiotransferase RimO (433 aa).

The region spanning glutamine 6–arginine 122 is the MTTase N-terminal domain. The [4Fe-4S] cluster site is built by cysteine 15, cysteine 51, cysteine 85, cysteine 146, cysteine 150, and cysteine 153. Residues leucine 132–glutamate 362 form the Radical SAM core domain. The 68-residue stretch at arginine 365–aspartate 432 folds into the TRAM domain.

The protein belongs to the methylthiotransferase family. RimO subfamily. It depends on [4Fe-4S] cluster as a cofactor.

It is found in the cytoplasm. The catalysed reaction is L-aspartate(89)-[ribosomal protein uS12]-hydrogen + (sulfur carrier)-SH + AH2 + 2 S-adenosyl-L-methionine = 3-methylsulfanyl-L-aspartate(89)-[ribosomal protein uS12]-hydrogen + (sulfur carrier)-H + 5'-deoxyadenosine + L-methionine + A + S-adenosyl-L-homocysteine + 2 H(+). Functionally, catalyzes the methylthiolation of an aspartic acid residue of ribosomal protein uS12. This Prosthecochloris aestuarii (strain DSM 271 / SK 413) protein is Ribosomal protein uS12 methylthiotransferase RimO.